A 613-amino-acid chain; its full sequence is MFRCGGLAAGALKQKLVPLVRTVCVRSPRQRNRLPGNLFQRWHVPLELQMTRQMASSGASGGKIDNSVLVLIVGLSTVGAGAYAYKTMKEDEKRYNERISGLGLTPEQKQKKAALSASEGEEVPQDKAPSHVPFLLIGGGTAAFAAARSIRARDPGARVLIVSEDPELPYMRPPLSKELWFSDDPNVTKTLRFKQWNGKERSIYFQPPSFYVSAQDLPHIENGGVAVLTGKKVVQLDVRDNMVKLNDGSQITYEKCLIATGGTPRSLSAIDRAGAEVKSRTTLFRKIGDFRSLEKISREVKSITIIGGGFLGSELACALGRKARALGTEVIQLFPEKGNMGKILPEYLSNWTMEKVRREGVKVMPNAIVQSVGVSSGKLLIKLKDGRKVETDHIVAAVGLEPNVELAKTGGLEIDSDFGGFRVNAELQARSNIWVAGDAACFYDIKLGRRRVEHHDHAVVSGRLAGENMTGAAKPYWHQSMFWSDLGPDVGYEAIGLVDSSLPTVGVFAKATAQDNPKSATEQSGTGIRSESETESEASEITIPPSTPAVPQAPVQGEDYGKGVIFYLRDKVVVGIVLWNIFNRMPIARKIIKDGEQHEDLNEVAKLFNIHED.

2 consecutive short sequence motifs (mitochondrial localization signal) follow at residues 1–31 and 63–89; these read MFRC…PRQR and KIDN…KTMK. The transit peptide at 1–54 directs the protein to the mitochondrion; the sequence is MFRCGGLAAGALKQKLVPLVRTVCVRSPRQRNRLPGNLFQRWHVPLELQMTRQM. A propeptide spans 55 to 101 (removed in mature form); it reads ASSGASGGKIDNSVLVLIVGLSTVGAGAYAYKTMKEDEKRYNERISG. The disordered stretch occupies residues 100–127; it reads SGLGLTPEQKQKKAALSASEGEEVPQDK. Phosphothreonine is present on threonine 105. Residue lysine 109 is modified to N6-succinyllysine. Phosphoserine occurs at positions 116 and 118. Residues 134–483 are FAD-dependent oxidoreductase; it reads FLLIGGGTAA…KPYWHQSMFW (350 aa). FAD-binding positions include 138-142, 164-165, arginine 172, and lysine 177; these read GGGTA and ED. Position 196 (tryptophan 196) interacts with NAD(+). An FAD-binding site is contributed by valine 233. Lysine 255 is covalently cross-linked (Glycyl lysine isopeptide (Lys-Gly) (interchain with G-Cter in ubiquitin)). Serine 268 carries the phosphoserine modification. Arginine 285 is an FAD binding site. Phosphoserine is present on serine 292. NAD(+)-binding positions include 308–311, glutamate 336, and lysine 342; that span reads GGFL. Position 371 is a phosphoserine (serine 371). At lysine 388 the chain carries N6-acetyllysine. Glycine 399 lines the NAD(+) pocket. Aspartate 438 is a binding site for FAD. Positions 446–451 match the Nuclear localization signal motif; it reads KLGRRR. Residues 453–454, tryptophan 483, and glutamate 493 contribute to the NAD(+) site; that span reads EH. FAD is bound by residues 454–455 and tryptophan 483; that span reads HH. The span at 513–529 shows a compositional bias: polar residues; the sequence is AQDNPKSATEQSGTGIR. Positions 513-554 are disordered; sequence AQDNPKSATEQSGTGIRSESETESEASEITIPPSTPAVPQAP. Threonine 521 bears the Phosphothreonine mark. Residues serine 524 and serine 530 each carry the phosphoserine modification. Asparagine 583 contributes to the NAD(+) binding site. Lysine 593 is modified (N6-acetyllysine).

This sequence belongs to the FAD-dependent oxidoreductase family. In terms of assembly, monomer (oxidized form). Homodimer (reduced form). Upon reduction with NADH, undergoes dimerization and forms tight, long-lived FADH2-NAD charge transfer complexes (CTC) resistant to oxidation. Also dimerizes with isoform 3 preventing its release from mitochondria. Interacts with XIAP/BIRC4. Interacts (via N-terminus) with EIF3G (via C-terminus). Interacts with PRELID1. Interacts with CHCHD4; the interaction increases in presence of NADH. Interacts with processed form of PARP1 (Poly [ADP-ribose] polymerase 1, processed C-terminus); interaction is mediated with poly-ADP-ribose chains attached to PARP1, promoting translocation into the nucleus. Requires FAD as cofactor. Post-translationally, under normal conditions, a 54-residue N-terminal segment is first proteolytically removed during or just after translocation into the mitochondrial intermembrane space (IMS) by the mitochondrial processing peptidase (MPP) to form the inner-membrane-anchored mature form (AIFmit). During apoptosis, it is further proteolytically processed at amino-acid position 101 leading to the generation of the mature form, which is confined to the mitochondrial IMS in a soluble form (AIFsol). AIFsol is released to the cytoplasm in response to specific death signals, and translocated to the nucleus, where it induces nuclear apoptosis in a caspase-independent manner. In terms of processing, ubiquitination by XIAP/BIRC4 does not lead to proteasomal degradation. Ubiquitination at Lys-255 by XIAP/BIRC4 blocks its ability to bind DNA and induce chromatin degradation, thereby inhibiting its ability to induce cell death. Expressed in all tested tissues. Detected in muscle and skin fibroblasts (at protein level). Expressed in osteoblasts (at protein level). As to expression, brain specific. In terms of tissue distribution, expressed in all tested tissues except brain. Isoform 5 is frequently down-regulated in human cancers.

Its subcellular location is the mitochondrion intermembrane space. The protein localises to the mitochondrion inner membrane. It localises to the cytoplasm. The protein resides in the nucleus. It is found in the perinuclear region. Its subcellular location is the mitochondrion. The protein localises to the cytosol. It catalyses the reaction A + NADH + H(+) = AH2 + NAD(+). Functionally, functions both as NADH oxidoreductase and as regulator of apoptosis. In response to apoptotic stimuli, it is released from the mitochondrion intermembrane space into the cytosol and to the nucleus, where it functions as a proapoptotic factor in a caspase-independent pathway. Release into the cytoplasm is mediated upon binding to poly-ADP-ribose chains. The soluble form (AIFsol) found in the nucleus induces 'parthanatos' i.e. caspase-independent fragmentation of chromosomal DNA. Binds to DNA in a sequence-independent manner. Interacts with EIF3G, and thereby inhibits the EIF3 machinery and protein synthesis, and activates caspase-7 to amplify apoptosis. Plays a critical role in caspase-independent, pyknotic cell death in hydrogen peroxide-exposed cells. In contrast, participates in normal mitochondrial metabolism. Plays an important role in the regulation of respiratory chain biogenesis by interacting with CHCHD4 and controlling CHCHD4 mitochondrial import. Has NADH oxidoreductase activity. Does not induce nuclear apoptosis. In terms of biological role, pro-apoptotic isoform. This chain is Apoptosis-inducing factor 1, mitochondrial, found in Homo sapiens (Human).